Reading from the N-terminus, the 256-residue chain is Ribonuclease HII (256 aa).

The region spanning 72-256 (ALICGIDEVG…SFEPIKSMMK (185 aa)) is the RNase H type-2 domain. A divalent metal cation contacts are provided by D78, E79, and D170.

This sequence belongs to the RNase HII family. It depends on Mn(2+) as a cofactor. Requires Mg(2+) as cofactor.

It is found in the cytoplasm. It carries out the reaction Endonucleolytic cleavage to 5'-phosphomonoester.. Endonuclease that specifically degrades the RNA of RNA-DNA hybrids. The polypeptide is Ribonuclease HII (Staphylococcus epidermidis (strain ATCC 12228 / FDA PCI 1200)).